The sequence spans 324 residues: Short chain dehydrogenase/reductase dmxR8 (324 aa).

NADP(+) contacts are provided by L33, K58, D83, and N110. S163 functions as the Proton donor in the catalytic mechanism. Y200 and K204 together coordinate NADP(+). Catalysis depends on Y200, which acts as the Proton acceptor. K204 acts as the Lowers pKa of active site Tyr in catalysis.

It belongs to the short-chain dehydrogenases/reductases (SDR) family.

It functions in the pathway secondary metabolite biosynthesis. Its function is as follows. Short chain dehydrogenase; part of the gene cluster that mediates the biosynthesis of the dimeric xanthones cryptosporioptides. The pathway begins with the synthesis of atrochrysone thioester by the polyketide synthase dmx-nrPKS. The atrochrysone carboxyl ACP thioesterase dmxR1 then breaks the thioester bond and releases the atrochrysone carboxylic acid from dmx-nrPKS. Atrochrysone carboxylic acid is decarboxylated by the decarboxylase dmxR15, and oxidized by the anthrone oxygenase dmxR16 to yield emodin. Emodin is then reduced to emodin hydroquinone by the oxidoreductase dmxR7. A-ring reduction by the short chain dehydrogenase dmxR18, dehydration by the scytalone dehydratase-like protein dmxR17 and probable spontaneous re-oxidation, results in overall deoxygenation to chrysophanol. Baeyer-Villiger oxidation by the Baeyer-Villiger monooxygenase (BVMO) dmxR6 then yields monodictylactone in equilibrium with monodictyphenone. In the case of the cryptosporioptides biosynthesis, monodictylactone is reduced at C-12 to an alcohol (by the short chain dehydrogenases dmxR12 or dmxR8) and hydroxylated at C-5 by dmxR9, yielding the electron-rich aromatic which could eliminate H(2)O to form the ortho-quinonemethide, followed by tautomerisation to paraquinone and complete the formal reduction to produce the 10-methylgroup. Conjugate addition of C-4a-OH to the resulting paraquinone by the monooxygenase dmxR10 then gives cyclohexadienone, which is then reduced at C-5 by the short chain dehydrogenase dmxR3 to give the dihydroxanthone. The 6,7-epoxide in the cryptosporioptides could be introduced by the cytochrome P450 monooxygenase dmxL3. The highly reducing PKS dmxL2 manufactures butyrate, which is further carboxylated by dmxL1 to form ethylmalonate. It is not yet clear whether the carboxylation occurs while the butyrate is attached to the ACP of dmxL2, but this unusual fungal metabolite could then be esterified to O-5 by the O-acetyltransferase dmxR13. Finally, dimerization performed by dmxR5 gives the observed dimers cryptosporioptides A, B and C as the final products of the pathway. This Cryptosporiopsis sp. (strain 8999) protein is Short chain dehydrogenase/reductase dmxR8.